A 170-amino-acid polypeptide reads, in one-letter code: Cyclic dof factor 4 (170 aa).

The tract at residues 25 to 51 is disordered; that stretch reads NEEETHPPEQEATIAVRSSSSSDLTAE. The Dof-type zinc-finger motif lies at 58–112; sequence IACPRCKSMETKFCYFNNYNVNQPRHFCKGCHRYWTAGGALRNVPVGAGRRKSKP. Residues Cys60, Cys63, Cys85, and Cys88 each contribute to the Zn(2+) site.

In terms of tissue distribution, expressed in the vasculature of cotyledons and hypocotyls, leaves and roots.

The protein localises to the nucleus. Transcription factor that binds specifically to a 5'-AA[AG]G-3' consensus core sequence. Transcriptional repressor of 'CONSTANS' expression. Regulates a photoperiodic flowering response. In Arabidopsis thaliana (Mouse-ear cress), this protein is Cyclic dof factor 4 (CDF4).